Consider the following 50-residue polypeptide: MRVLLIIAGLALLSVVCYTSEMKEQNSLNEVLSAFFDVEEPQEKGCIICF.

The N-terminal stretch at 1–19 (MRVLLIIAGLALLSVVCYT) is a signal peptide.

This sequence belongs to the neurotoxin 10 (Hwtx-1) family. 67 (Jztx-67) subfamily. As to expression, expressed by the venom gland.

It is found in the secreted. This chain is U37-theraphotoxin-Cg1a, found in Chilobrachys guangxiensis (Chinese earth tiger tarantula).